A 463-amino-acid chain; its full sequence is Dialkyldecalin synthase (463 aa).

FAD-binding positions include V13, 32–33 (ER), I121, and D275.

It belongs to the PheA/TfdB FAD monooxygenase family. As to quaternary structure, homodimer. FAD serves as cofactor.

The enzyme catalyses 4-[(2E,7S,8E,10E,13R,14R,16E,18E)-14-ethyl-7,13-dihydroxy-2,16,18-trimethylicosa-2,8,10,16,18-pentaenoyl]-2-methylidene-5-oxo-2,5-dihydro-1H-pyrrol-3-olate = 4-[(1R,2R,4aS,5S,8aR)-2-[(2R,3R,5E,7E)-3-ethyl-2-hydroxy-5,7-dimethylnona-5,7-dien-1-yl]-5-hydroxy-1-methyl-1,2,4a,5,6,7,8,8a-octahydronaphthalene-1-carbonyl]-2-methylidene-5-oxo-2,5-dihydro-1H-pyrrol-3-olate. Its pathway is antibiotic biosynthesis. In terms of biological role, involved in the biosynthesis of the spirotetramate antibiotics pyrroindomycins. Catalyzes the intramolecular cyclization forming the dialkyldecalin moiety in pyrroindomycins, via an endo-selective [4+2] cycloaddition reaction. The chain is Dialkyldecalin synthase from Streptomyces rugosporus.